Reading from the N-terminus, the 221-residue chain is Urease accessory protein UreF (221 aa).

The protein belongs to the UreF family. As to quaternary structure, ureD, UreF and UreG form a complex that acts as a GTP-hydrolysis-dependent molecular chaperone, activating the urease apoprotein by helping to assemble the nickel containing metallocenter of UreC. The UreE protein probably delivers the nickel.

Its subcellular location is the cytoplasm. Its function is as follows. Required for maturation of urease via the functional incorporation of the urease nickel metallocenter. This chain is Urease accessory protein UreF, found in Aliivibrio fischeri (strain MJ11) (Vibrio fischeri).